Reading from the N-terminus, the 496-residue chain is MTARVLMVQGTSSSAGKSLIVAGLCRLYARRGFRVAPFKSQNMALNSYATPDGREIGRAQALQAEAAGVPPHVDMNPILLKPTGEAGSQVVLLGRPLGVYKPANYYALKEKLWPLAAAALDRLRADADLVFAEGAGSPAEINLRPHDIANMEVALYAGASVLLVGDIERGGVFASLLGTMELLAERERELVAGFVVNKFRGDEELLRPGLALIGARTGRPVLGVLPYLHDLHLDEEDSVGLSGRGKAPAPGDLAVAVIRLPRISNYTDFLPLETENGVALCYVDRPQELDGAHAVILPGSKETLADLAWLRRRGLDRALRDFAARGKPLLGICGGFQMLGRTIREGGQTVAGLGLLPVRTRFASEKRTVQVRGVTAEGVWGIPGGLSVRGYEIHRGFSEVCGGRPCFLLGGQGTGLAPEGCAAEEGYVAGTYLHGCFDSDTYRTQWIAAVRRLAGLPARPSEQPGFAARRQRDLDRIADLLAERIGVERLDGILGL.

A GATase cobBQ-type domain is found at 252–442; it reads DLAVAVIRLP…LHGCFDSDTY (191 aa). C333 (nucleophile) is an active-site residue. H434 is a catalytic residue.

This sequence belongs to the CobB/CobQ family. CobQ subfamily.

It functions in the pathway cofactor biosynthesis; adenosylcobalamin biosynthesis. Catalyzes amidations at positions B, D, E, and G on adenosylcobyrinic A,C-diamide. NH(2) groups are provided by glutamine, and one molecule of ATP is hydrogenolyzed for each amidation. The polypeptide is Cobyric acid synthase (Desulforudis audaxviator (strain MP104C)).